A 399-amino-acid chain; its full sequence is MSIISTRLNSIKPSPTLAVVKKTLELKKAGVNIIALGAGEPDFDTPDNIKEVAITSIKDGFTKYTNVDGIPLLKQAIKNKFKRENNIDYELDEIIVSTGGKQVIYNLFMASLDKGDEVIIPVPYWVSYPDMVALSTGTPIFVNCGIENNFKLTVEALERSITDKTKWLIINSPSNPTGAGYNCKELENIAKTLRKYPNVNIMSDDIYEHITFDDFKFYTLAQIAPDLKERIFTVNGVSKAYSMTGWRIGYGAGSKALIKAMTVIQSQSTSNPCSISQMAAIEALNGTQDYIKPNALNFQKKRDLALSILEKVIYFECYKPEGAFYLFVKCDKIFGTKTKSGKIIANSNHFSEYLLEEAKVAVVPGVAFGLDGYFRISYATSMQELKEACIRIKQACNTL.

3 residues coordinate L-aspartate: glycine 39, tryptophan 125, and asparagine 175. At lysine 239 the chain carries N6-(pyridoxal phosphate)lysine. Arginine 375 contributes to the L-aspartate binding site.

It belongs to the class-I pyridoxal-phosphate-dependent aminotransferase family. Homodimer. Pyridoxal 5'-phosphate serves as cofactor.

The protein resides in the cytoplasm. The enzyme catalyses L-aspartate + 2-oxoglutarate = oxaloacetate + L-glutamate. It catalyses the reaction L-arogenate + 2-oxoglutarate = prephenate + L-glutamate. Catalyzes the reversible conversion of aspartate and 2-oxoglutarate to glutamate and oxaloacetate. Can also transaminate prephenate in the presence of glutamate. The polypeptide is Probable aspartate/prephenate aminotransferase (aatA) (Rickettsia typhi (strain ATCC VR-144 / Wilmington)).